The sequence spans 2336 residues: Genome polyprotein (2336 aa).

Residues 1–201 enclose the Peptidase C28 domain; it reads MNTTDCFIAL…WKAKVQKRLK (201 aa). Topologically, residues 1-1481 are cytoplasmic; it reads MNTTDCFIAL…SFVKRAFKRL (1481 aa). Active-site for leader protease activity residues include Cys-51, His-148, and Asp-163. 2 disordered regions span residues 197–218 and 238–265; these read QKRL…QSGN and QLGD…NTQN. Gly-202 is lipidated: N-myristoyl glycine; by host. Polar residues-rich tracts occupy residues 204–218 and 238–251; these read GQSS…QSGN and QLGD…SNEG. The segment covering 252–265 has biased composition (low complexity); that stretch reads STDTTSTHTTNTQN. The antigenic epitope stretch occupies residues 789-797; that stretch reads ALLRAATYY. The Cell attachment site motif lies at 869 to 871; sequence RGD. The 165-residue stretch at 1190–1354 folds into the SF3 helicase domain; that stretch reads NVHIANLCKV…DGYKVNNKLD (165 aa). 1218–1225 serves as a coordination point for ATP; the sequence is GKSGQGKS. Residues 1482 to 1502 lie within the membrane without spanning it; that stretch reads KENFEIVALCLTLLANIVIMI. Topologically, residues 1503–2336 are cytoplasmic; the sequence is RETRKRQQMV…NAVCGDAQSL (834 aa). Residues 1556–1591 form a disordered region; sequence PGHRASDDVNSEPARPVEEQPQAEGPYTGPLERQKP. Tyr-1582, Tyr-1605, and Tyr-1629 each carry O-(5'-phospho-RNA)-tyrosine. Residues 1653–1849 enclose the Peptidase C3 domain; the sequence is APPTDLQKMV…YCSCVSRSML (197 aa). The active-site For protease 3C activity; Proton donor/acceptor is the His-1696. Catalysis depends on for protease 3C activity residues Asp-1734 and Cys-1813. The Nuclear localization signal signature appears at 1879–1887; sequence MRKTKLAPT. The RdRp catalytic domain occupies 2097 to 2215; it reads KNVWDVDYSA…ASDYDLDFEA (119 aa). Asp-2201 serves as the catalytic For RdRp activity.

Belongs to the picornaviruses polyprotein family. Interacts with host ISG15. In terms of assembly, interacts (via R-G-D motif) with host ITGAV/ITGB6. Interacts with host MAVS; this interaction inhibits binding of host TRAF3 to MAVS, thereby suppressing interferon-mediated responses. As to quaternary structure, forms homooligomers. Homohexamer. Interacts with host VIM. Interacts with host BECN1. In terms of assembly, interacts with host DCTN3. As to quaternary structure, interacts with RNA-dependent RNA polymerase; this interaction allows 3B-1 to binds 2 polymerases and act as a primer. It also allows the recruitment of the RNA-dependent RNA polymerase to host membranes. Interacts with RNA-dependent RNA polymerase; this interaction allows 3B-2 to act as a primer. In terms of assembly, interacts with RNA-dependent RNA polymerase; this interaction allows 3B-3 to act as a primer. As to quaternary structure, interacts with 3B-1; this interaction allows 3B-1 to binds 2 polymerases and act as a primer. It also allows the recruitment of the RNA-dependent RNA polymerase to host membranes. Interacts with 3B-2; this interaction allows 3B-2 to act as a primer. Interacts with 3B-3; this interaction allows 3B-3 to act as a primer. Removes six residues from its own C-terminus, generating sLb(pro). In terms of processing, specific enzymatic cleavages in vivo by the viral proteases yield a variety of precursors and mature proteins. The polyprotein seems to be cotranslationally cleaved at the 2A/2B junction by a ribosomal skip from one codon to the next without formation of a peptide bond. This process would release the L-P1-2A peptide from the translational complex. Post-translationally, during virion maturation, immature virions are rendered infectious following cleavage of VP0 into VP4 and VP2. This maturation seems to be an autocatalytic event triggered by the presence of RNA in the capsid and is followed by a conformational change of the particle. Myristoylation is required during RNA encapsidation and formation of the mature virus particle. In terms of processing, uridylylated by the polymerase and covalently linked to the 5'-end of genomic RNA. These uridylylated forms act as a nucleotide-peptide primer for the polymerase.

Its subcellular location is the host nucleus. The protein resides in the host cytoplasm. It localises to the virion. The protein localises to the host endoplasmic reticulum membrane. It is found in the host cytoplasmic vesicle membrane. The catalysed reaction is Autocatalytically cleaves itself from the polyprotein of the foot-and-mouth disease virus by hydrolysis of a Lys-|-Gly bond, but then cleaves host cell initiation factor eIF-4G at bonds -Gly-|-Arg- and -Lys-|-Arg-.. It catalyses the reaction a ribonucleoside 5'-triphosphate + H2O = a ribonucleoside 5'-diphosphate + phosphate + H(+). It carries out the reaction RNA(n) + a ribonucleoside 5'-triphosphate = RNA(n+1) + diphosphate. The enzyme catalyses Selective cleavage of Gln-|-Gly bond in the poliovirus polyprotein. In other picornavirus reactions Glu may be substituted for Gln, and Ser or Thr for Gly.. In terms of biological role, autocatalytically cleaves itself from the polyprotein at the L/VP0 junction. Also cleaves the host translation initiation factors EIF4G1 and EIF4G3, in order to shut off the capped cellular mRNA transcription. Plays a role in counteracting host innate antiviral response using diverse mechanisms. Possesses a deubiquitinase activity acting on both 'Lys-48' and 'Lys-63'-linked polyubiquitin chains. In turn, inhibits the ubiquitination and subsequent activation of key signaling molecules of type I IFN response such as host RIGI, TBK1, TRAF3 and TRAF6. Inhibits host NF-kappa-B activity by inducing a decrease in RELA mRNA levels. Cleaves a peptide bond in the C-terminus of host ISG15, resulting in the damaging of this modifier that can no longer be attached to target proteins. Also cleaves host G3BP1 and G3BP2 in order to inhibit cytoplasmic stress granules assembly. Functionally, lies on the inner surface of the capsid shell. After binding to the host receptor, the capsid undergoes conformational changes. Capsid protein VP4 is released, capsid protein VP1 N-terminus is externalized, and together, they shape a pore in the host membrane through which the viral genome is translocated into the host cell cytoplasm. After genome has been released, the channel shrinks. Its function is as follows. Forms an icosahedral capsid of pseudo T=3 symmetry with capsid proteins VP1 and VP3. The capsid is composed of 60 copies of each capsid protein organized in the form of twelve pentamers and encloses the viral positive strand RNA genome. Upon acidifcation in the endosome, dissociates into pentamers. Forms an icosahedral capsid of pseudo T=3 symmetry with capsid proteins VP0 and VP3. The capsid is composed of 60 copies of each capsid protein organized in the form of twelve pentamers and encloses the viral positive strand RNA genome. Upon acidifcation in the endosome, dissociates into pentamers. In terms of biological role, forms an icosahedral capsid of pseudo T=3 symmetry with capsid proteins VP2 and VP3. The capsid is composed of 60 copies of each capsid protein organized in the form of twelve pentamers and encloses the viral positive strand RNA genome. Mediates cell entry by attachment to an integrin receptor, usually host ITGAV/ITGB6. In addition, targets host MAVS to suppress type I IFN pathway. Upon acidifcation in the endosome, dissociates into pentamers. Functionally, mediates self-processing of the polyprotein by a translational effect termed 'ribosome skipping'. Mechanistically, 2A-mediated cleavage occurs between the C-terminal glycine and the proline of the downstream protein 2B. In the case of foot-and-mouth disease virus, the 2A oligopeptide is post-translationally 'trimmed' from the C-terminus of the upstream protein 1D by 3C proteinase. Its function is as follows. Plays an essential role in the virus replication cycle by acting as a viroporin. Creates a pore in the host endoplasmic reticulum and as a consequence releases Ca2+ in the cytoplasm of infected cell. In turn, high levels of cytoplasmic calcium may trigger membrane trafficking and transport of viral ER-associated proteins to viroplasms, sites of viral genome replication. Associates with and induces structural rearrangements of intracellular membranes. Triggers host autophagy by interacting with host BECN1 and thereby promotes viral replication. Participates in viral replication and interacts with host DHX9. Displays RNA-binding, nucleotide binding and NTPase activities. May play a role in virion morphogenesis and viral RNA encapsidation by interacting with the capsid protein VP3. In terms of biological role, plays important roles in virus replication, virulence and host range. Cooperates with host DDX56 to inhibit IRF3 nuclear translocation and subsequent type I interferon production. Functionally, covalently linked to the 5'-end of both the positive-strand and negative-strand genomic RNAs. Acts as a genome-linked replication primer. Its function is as follows. Cysteine protease that generates mature viral proteins from the precursor polyprotein. In addition to its proteolytic activity, binds to viral RNA and thus influences viral genome replication. RNA and substrate bind cooperatively to the protease. RNA-directed RNA polymerase 3D-POL replicates genomic and antigenomic RNA by recognizing replications specific signals. Covalently attaches UMP to a tyrosine of VPg, which is used to prime RNA synthesis. The positive stranded RNA genome is first replicated at virus induced membranous vesicles, creating a dsRNA genomic replication form. This dsRNA is then used as template to synthesize positive stranded RNA genomes. ss(+)RNA genomes are either translated, replicated or encapsidated. In Foot-and-mouth disease virus (isolate -/Azerbaijan/A22-550/1965 serotype A) (FMDV), this protein is Genome polyprotein.